We begin with the raw amino-acid sequence, 567 residues long: Urease subunit alpha (567 aa).

One can recognise a Urease domain in the interval 129-567 (GGIDTHIHWI…LPMAQRYFLF (439 aa)). 3 residues coordinate Ni(2+): histidine 134, histidine 136, and lysine 217. N6-carboxylysine is present on lysine 217. Histidine 219 is a binding site for substrate. Histidine 246 and histidine 272 together coordinate Ni(2+). Residue histidine 320 is the Proton donor of the active site. Aspartate 360 lines the Ni(2+) pocket.

Belongs to the metallo-dependent hydrolases superfamily. Urease alpha subunit family. As to quaternary structure, heterotrimer of UreA (gamma), UreB (beta) and UreC (alpha) subunits. Three heterotrimers associate to form the active enzyme. Requires Ni cation as cofactor. Post-translationally, carboxylation allows a single lysine to coordinate two nickel ions.

Its subcellular location is the cytoplasm. The catalysed reaction is urea + 2 H2O + H(+) = hydrogencarbonate + 2 NH4(+). The protein operates within nitrogen metabolism; urea degradation; CO(2) and NH(3) from urea (urease route): step 1/1. This Enterobacter sp. (strain 638) protein is Urease subunit alpha.